A 290-amino-acid polypeptide reads, in one-letter code: 4-hydroxy-tetrahydrodipicolinate synthase (290 aa).

Residue Thr-44 participates in pyruvate binding. Tyr-132 serves as the catalytic Proton donor/acceptor. The active-site Schiff-base intermediate with substrate is Lys-160. Ile-202 contributes to the pyruvate binding site.

The protein belongs to the DapA family. As to quaternary structure, homotetramer; dimer of dimers.

It is found in the cytoplasm. It carries out the reaction L-aspartate 4-semialdehyde + pyruvate = (2S,4S)-4-hydroxy-2,3,4,5-tetrahydrodipicolinate + H2O + H(+). The protein operates within amino-acid biosynthesis; L-lysine biosynthesis via DAP pathway; (S)-tetrahydrodipicolinate from L-aspartate: step 3/4. Its function is as follows. Catalyzes the condensation of (S)-aspartate-beta-semialdehyde [(S)-ASA] and pyruvate to 4-hydroxy-tetrahydrodipicolinate (HTPA). The chain is 4-hydroxy-tetrahydrodipicolinate synthase from Legionella pneumophila (strain Corby).